The chain runs to 316 residues: Ribosomal protein L11 methyltransferase (316 aa).

Residues Thr162, Gly183, Asp205, and Asn248 each contribute to the S-adenosyl-L-methionine site.

This sequence belongs to the methyltransferase superfamily. PrmA family.

The protein localises to the cytoplasm. The catalysed reaction is L-lysyl-[protein] + 3 S-adenosyl-L-methionine = N(6),N(6),N(6)-trimethyl-L-lysyl-[protein] + 3 S-adenosyl-L-homocysteine + 3 H(+). Methylates ribosomal protein L11. The protein is Ribosomal protein L11 methyltransferase of Levilactobacillus brevis (strain ATCC 367 / BCRC 12310 / CIP 105137 / JCM 1170 / LMG 11437 / NCIMB 947 / NCTC 947) (Lactobacillus brevis).